The chain runs to 347 residues: Heat-inducible transcription repressor HrcA (347 aa).

It belongs to the HrcA family.

In terms of biological role, negative regulator of class I heat shock genes (grpE-dnaK-dnaJ and groELS operons). Prevents heat-shock induction of these operons. The sequence is that of Heat-inducible transcription repressor HrcA from Lactobacillus delbrueckii subsp. bulgaricus (strain ATCC BAA-365 / Lb-18).